Consider the following 1078-residue polypeptide: DNA gyrase subunit B (1078 aa).

The 86-residue stretch at G889–P974 folds into the Toprim domain. The Mg(2+) site is built by E895, D939, and D941.

The protein belongs to the type II topoisomerase GyrB family. In terms of assembly, heterotetramer, composed of two GyrA and two GyrB chains. In the heterotetramer, GyrA contains the active site tyrosine that forms a transient covalent intermediate with DNA, while GyrB binds cofactors and catalyzes ATP hydrolysis. The cofactor is Mg(2+). In terms of processing, this protein undergoes a protein self splicing that involves a post-translational excision of the intervening region (intein) followed by peptide ligation.

Its subcellular location is the cytoplasm. It carries out the reaction ATP-dependent breakage, passage and rejoining of double-stranded DNA.. In terms of biological role, a type II topoisomerase that negatively supercoils closed circular double-stranded (ds) DNA in an ATP-dependent manner to modulate DNA topology and maintain chromosomes in an underwound state. Negative supercoiling favors strand separation, and DNA replication, transcription, recombination and repair, all of which involve strand separation. Also able to catalyze the interconversion of other topological isomers of dsDNA rings, including catenanes and knotted rings. Type II topoisomerases break and join 2 DNA strands simultaneously in an ATP-dependent manner. In Synechocystis sp. (strain ATCC 27184 / PCC 6803 / Kazusa), this protein is DNA gyrase subunit B (gyrB).